The primary structure comprises 418 residues: Tektin-1 (418 aa).

3 coiled-coil regions span residues 21-84 (KNQY…LEQL), 268-308 (LKET…DQEG), and 336-383 (RLIK…ENTI). The segment at 399–418 (PRDGDDHGEWAGGSHPEAVC) is disordered.

This sequence belongs to the tektin family. In terms of assembly, microtubule inner protein component of sperm flagellar doublet microtubules. Ubiquitinated, leading to its degradation. Deubiquitinated by USP16, promoting its stability. As to expression, expressed in trachea multiciliated cells.

Its subcellular location is the cytoplasm. The protein localises to the cytoskeleton. The protein resides in the cilium axoneme. It is found in the flagellum axoneme. Its function is as follows. Microtubule inner protein (MIP) part of the dynein-decorated doublet microtubules (DMTs) in cilia and flagellar axoneme. Forms filamentous polymers in the walls of ciliary and flagellar microtubules. This is Tektin-1 (TEKT1) from Bos taurus (Bovine).